Here is a 78-residue protein sequence, read N- to C-terminus: Large ribosomal subunit protein bL28 (78 aa).

Residues 1 to 21 are disordered; it reads MSRVCQVTGKRPMVGNNRSHA.

It belongs to the bacterial ribosomal protein bL28 family.

This Shewanella halifaxensis (strain HAW-EB4) protein is Large ribosomal subunit protein bL28.